A 295-amino-acid polypeptide reads, in one-letter code: Diaminopimelate epimerase (295 aa).

Positions 13, 46, and 66 each coordinate substrate. C75 (proton donor) is an active-site residue. Residues 76-77, N162, N195, and 213-214 each bind substrate; these read GN and ER. C222 (proton acceptor) is an active-site residue. 223–224 contacts substrate; sequence GT.

The protein belongs to the diaminopimelate epimerase family. Homodimer.

Its subcellular location is the cytoplasm. It catalyses the reaction (2S,6S)-2,6-diaminopimelate = meso-2,6-diaminopimelate. The protein operates within amino-acid biosynthesis; L-lysine biosynthesis via DAP pathway; DL-2,6-diaminopimelate from LL-2,6-diaminopimelate: step 1/1. Functionally, catalyzes the stereoinversion of LL-2,6-diaminopimelate (L,L-DAP) to meso-diaminopimelate (meso-DAP), a precursor of L-lysine and an essential component of the bacterial peptidoglycan. The protein is Diaminopimelate epimerase of Psychrobacter arcticus (strain DSM 17307 / VKM B-2377 / 273-4).